We begin with the raw amino-acid sequence, 418 residues long: STE20-related kinase adapter protein beta (418 aa).

One can recognise a Protein kinase domain in the interval 58–369 (YELQVEIGRG…ASSLLSHVFF (312 aa)). ATP-binding positions include 64–72 (IGRGFDNLT) and K89.

It belongs to the protein kinase superfamily. STE Ser/Thr protein kinase family. STE20 subfamily. As to quaternary structure, component of a trimeric complex composed of STK11/LKB1, STRAD (STRADA or STRADB) and CAB39/MO25 (CAB39/MO25alpha or CAB39L/MO25beta): the complex tethers STK11/LKB1 in the cytoplasm and stimulates its catalytic activity. Interacts with BIRC4/XIAP. These two proteins are likely to coexist in a complex with TAK1, TRAF6, TAB1 and TAB2.

The protein resides in the nucleus. Its subcellular location is the cytoplasm. In terms of biological role, pseudokinase which, in complex with CAB39/MO25 (CAB39/MO25alpha or CAB39L/MO25beta), binds to and activates STK11/LKB1. Adopts a closed conformation typical of active protein kinases and binds STK11/LKB1 as a pseudosubstrate, promoting conformational change of STK11/LKB1 in an active conformation. The sequence is that of STE20-related kinase adapter protein beta (Stradb) from Mus musculus (Mouse).